The following is a 220-amino-acid chain: Urease accessory protein UreF (220 aa).

This sequence belongs to the UreF family. As to quaternary structure, ureD, UreF and UreG form a complex that acts as a GTP-hydrolysis-dependent molecular chaperone, activating the urease apoprotein by helping to assemble the nickel containing metallocenter of UreC. The UreE protein probably delivers the nickel.

The protein localises to the cytoplasm. Its function is as follows. Required for maturation of urease via the functional incorporation of the urease nickel metallocenter. In Bordetella parapertussis (strain 12822 / ATCC BAA-587 / NCTC 13253), this protein is Urease accessory protein UreF.